The primary structure comprises 670 residues: Solute carrier organic anion transporter family member 1A1 (670 aa).

Residues 1 to 20 are Cytoplasmic-facing; the sequence is MEETEKKVATQEGRFFSKMK. Residues 21–40 traverse the membrane as a helical segment; that stretch reads VFLMSLTCAYLAKSLSGVYM. Over 41–59 the chain is Extracellular; it reads NSMLTQIERQFGIPTSVVG. Residues 60–80 form a helical membrane-spanning segment; sequence FITGSFEIGNLLLIVFVSYFG. At 81–86 the chain is on the cytoplasmic side; sequence RKLHRP. Residues 87–111 form a helical membrane-spanning segment; that stretch reads IIIGVGCVVMGLGCFLMASPHFLMG. The Extracellular portion of the chain corresponds to 112-155; it reads RYKYETTISPTSNLSSNSFLCIENRTQTLKPTQDPTECVKEIKS. Residues N124 and N135 are each glycosylated (N-linked (GlcNAc...) asparagine). Residues 156–184 form a helical membrane-spanning segment; the sequence is LMWIYVLIGNTMRGIGETPIMPLGISYIE. Residues 185-203 are Cytoplasmic-facing; the sequence is DFAKSENSPLYIGILEMGK. A helical membrane pass occupies residues 204 to 224; the sequence is IVGPIIGLLLGSFFARVYVDI. The Extracellular segment spans residues 225–242; that stretch reads GSVNTDDLTITPTDTRWV. Residues 243-267 form a helical membrane-spanning segment; the sequence is GAWWIGFLVCAGVNILTSIPFFFFP. Over 268–311 the chain is Cytoplasmic; the sequence is KTLPKKELQDNVDVTKYEKVEKHRERAKKENLGITKDFLPFMKS. A helical membrane pass occupies residues 312–333; the sequence is LCCNPIYMLFSLTSVLQINGFA. The Extracellular portion of the chain corresponds to 334–353; that stretch reads STFTFLPKYLEQQYGKSTSE. A helical membrane pass occupies residues 354-377; the sequence is AVFLIGVYSLPPVCLGYLISGFIM. Residues 378–381 lie on the Cytoplasmic side of the membrane; it reads KKFK. Residues 382 to 405 traverse the membrane as a helical segment; it reads ITVKKAAYIAFGLSLSEYFIFLCN. At 406 to 513 the chain is on the extracellular side; sequence YLLTCDNFPV…PECDNKLQYF (108 aa). The Kazal-like domain occupies 433–488; sequence KNVLADCNTRCSCLTDTWDPVCGDNGLAYMSACLAGCEKSVGTGTNMVFQNCSCIG. Cystine bridges form between C439/C469, C445/C465, and C454/C486. Residues N483 and N492 are each glycosylated (N-linked (GlcNAc...) asparagine). A helical membrane pass occupies residues 514–536; sequence LIKSVFSSFIFSLAAIPGYMVLL. The Cytoplasmic portion of the chain corresponds to 537–545; sequence RCVKSEEKS. The chain crosses the membrane as a helical span at residues 546 to 571; that stretch reads IGVGLHAFFIRLLAGIPAPVYFGALI. Topologically, residues 572–605 are extracellular; that stretch reads DRTCLHWGTLKCGQPGACRMYDINRFRHIYLGLP. Residues 606–623 form a helical membrane-spanning segment; the sequence is AAVRGSSFLPAVFILILM. Residues 624–670 are Cytoplasmic-facing; that stretch reads RKFHFPGDIHSPDTELAEMKLTEKESECTDVCRSPKVENDGELKTKL. At S634 the chain carries Phosphoserine.

This sequence belongs to the organo anion transporter (TC 2.A.60) family. In terms of assembly, binds to PDZK1. Interaction with PDZK1 is required for expression on hepatocyte surface. As to expression, highly expressed in liver, and at lower levels in kidney. Not detected in other tissues.

The protein localises to the basolateral cell membrane. It carries out the reaction estrone 3-sulfate(out) + hydrogencarbonate(in) = estrone 3-sulfate(in) + hydrogencarbonate(out). The catalysed reaction is taurocholate(out) + hydrogencarbonate(in) = taurocholate(in) + hydrogencarbonate(out). The enzyme catalyses L-thyroxine(out) = L-thyroxine(in). It catalyses the reaction prostaglandin E2(out) = prostaglandin E2(in). It carries out the reaction 17beta-estradiol 17-O-(beta-D-glucuronate)(out) = 17beta-estradiol 17-O-(beta-D-glucuronate)(in). The catalysed reaction is dehydroepiandrosterone 3-sulfate(out) = dehydroepiandrosterone 3-sulfate(in). Functionally, mediates the Na(+)-independent transport of organic anions such as steroid sulfate conjugates (dehydroepiandrosterone sulfate (DHEAS), 17-beta-glucuronosyl estradiol, estrone-3-sulfate), conjugated (taurocholate) and unconjugated (cholate) bile acids, prostaglandin E2 (PGE2) and L-thyroxine T4. Also capable of transporting sulfobromophthalein (BSP), ouabain and gadoxetate. Hydrogencarbonate/HCO3(-) acts as the probable counteranion that exchanges for organic anions. Shows a pH-sensitive substrate specificity which may be ascribed to the protonation state of the binding site and leads to a stimulation of substrate transport in an acidic microenvironment. This Mus musculus (Mouse) protein is Solute carrier organic anion transporter family member 1A1.